A 316-amino-acid chain; its full sequence is N-acetyl-gamma-glutamyl-phosphate reductase (316 aa).

The active site involves Cys136.

This sequence belongs to the NAGSA dehydrogenase family. Type 1 subfamily.

Its subcellular location is the cytoplasm. The catalysed reaction is N-acetyl-L-glutamate 5-semialdehyde + phosphate + NADP(+) = N-acetyl-L-glutamyl 5-phosphate + NADPH + H(+). Its pathway is amino-acid biosynthesis; L-arginine biosynthesis; N(2)-acetyl-L-ornithine from L-glutamate: step 3/4. Catalyzes the NADPH-dependent reduction of N-acetyl-5-glutamyl phosphate to yield N-acetyl-L-glutamate 5-semialdehyde. This chain is N-acetyl-gamma-glutamyl-phosphate reductase, found in Xanthomonas oryzae pv. oryzae (strain MAFF 311018).